We begin with the raw amino-acid sequence, 93 residues long: Alpha-defensin 9 (93 aa).

The signal sequence occupies residues M1–A19. The propeptide occupies D20–S58. Residues Q23–E56 are disordered. Cystine bridges form between C64-C92, C66-C81, and C71-C91.

It belongs to the alpha-defensin family. In terms of tissue distribution, paneth cells of the small bowel.

It is found in the secreted. Its function is as follows. Probably contributes to the antimicrobial barrier function of the small bowel mucosa. This chain is Alpha-defensin 9 (Defa9), found in Mus musculus (Mouse).